Reading from the N-terminus, the 146-residue chain is Snaclec alboaggregin-B subunit beta (146 aa).

A signal peptide spans 1–23; that stretch reads MGRFIFGSFGLLVLFLSLSGTGA. The region spanning 24–143 is the C-type lectin domain; it reads DCPSDWSSYD…CSRTYPFVCK (120 aa). Disulfide bonds link Cys-25-Cys-36, Cys-53-Cys-142, and Cys-119-Cys-134.

The protein belongs to the snaclec family. Heterodimer of subunits alpha and beta; disulfide-linked. As to expression, expressed by the venom gland.

The protein resides in the secreted. Its function is as follows. Weakly agglutinates platelets at high doses by binding to GPIbalpha (GP1BA). The protein is Snaclec alboaggregin-B subunit beta of Trimeresurus albolabris (White-lipped pit viper).